The primary structure comprises 479 residues: Ribulose bisphosphate carboxylase large chain (479 aa).

The propeptide occupies 1 to 2; sequence MS. Substrate-binding residues include N123 and T173. K175 functions as the Proton acceptor in the catalytic mechanism. K177 is a substrate binding site. Positions 201, 203, and 204 each coordinate Mg(2+). K201 is modified (N6-carboxylysine). S208 is subject to Phosphoserine. The Proton acceptor role is filled by H294. The substrate site is built by R295 and H327. Phosphothreonine is present on T330. S379 serves as a coordination point for substrate.

The protein belongs to the RuBisCO large chain family. Type I subfamily. In terms of assembly, heterohexadecamer of 8 large chains and 8 small chains; disulfide-linked. The disulfide link is formed within the large subunit homodimers. Requires Mg(2+) as cofactor. The disulfide bond which can form in the large chain dimeric partners within the hexadecamer appears to be associated with oxidative stress and protein turnover.

Its subcellular location is the plastid. The protein localises to the chloroplast. The enzyme catalyses 2 (2R)-3-phosphoglycerate + 2 H(+) = D-ribulose 1,5-bisphosphate + CO2 + H2O. The catalysed reaction is D-ribulose 1,5-bisphosphate + O2 = 2-phosphoglycolate + (2R)-3-phosphoglycerate + 2 H(+). Functionally, ruBisCO catalyzes two reactions: the carboxylation of D-ribulose 1,5-bisphosphate, the primary event in carbon dioxide fixation, as well as the oxidative fragmentation of the pentose substrate in the photorespiration process. Both reactions occur simultaneously and in competition at the same active site. The protein is Ribulose bisphosphate carboxylase large chain of Olimarabidopsis pumila (Dwarf rocket).